Consider the following 452-residue polypeptide: cAMP-dependent protein kinase regulatory subunit (452 aa).

The interval 28–212 (QFCANYFNSK…ELSKTLGSNF (185 aa)) is dimerization and phosphorylation. The interval 74–163 (IMTTNKRQPS…APPVPKSKIP (90 aa)) is disordered. Residues 75 to 84 (MTTNKRQPSF) are compositionally biased toward polar residues. A compositionally biased stretch (basic and acidic residues) spans 95–106 (SIDHHHDDDPKE). Position 173 is a phosphoserine (Ser173). A nucleoside 3',5'-cyclic phosphate contacts are provided by residues 213–330 (LFRQ…FLKD) and 333–451 (VLSS…QGSS). 3',5'-cyclic AMP-binding residues include Glu278, Arg287, Glu399, and Arg408.

This sequence belongs to the cAMP-dependent kinase regulatory chain family. As to quaternary structure, tetramer, composed of 2 regulatory (R) and 2 catalytic (C) subunits. In the presence of cAMP it dissociates into 2 active monomeric C subunits and an R dimer.

In Debaryomyces hansenii (strain ATCC 36239 / CBS 767 / BCRC 21394 / JCM 1990 / NBRC 0083 / IGC 2968) (Yeast), this protein is cAMP-dependent protein kinase regulatory subunit (PKAR).